The primary structure comprises 206 residues: Triafestin-1 (206 aa).

The signal sequence occupies residues 1–18; it reads MKTILAVIFFGILAFAFA. The N-linked (GlcNAc...) asparagine glycan is linked to Asn-55.

Belongs to the calycin superfamily. Triabin family. As to quaternary structure, interacts with host coagulation factor XII (F12) (inactive and activated) (via amino acids 1-77). Interacts with host high molecular weight kininogen (KNG1) (via amino acids 402-532). In terms of tissue distribution, salivary gland (at protein level).

The protein resides in the secreted. Its activity is regulated as follows. Zn(2+) modulates binding to host coagulation factor XII (F12) and high molecular weight kininogen (KNG1). Suppresses activation of the host plasma kallikrein-kinin system, leading to inhibition of the intrinsic coagulation pathway. Blocks host coagulation factor XII (F12) and prekallikrein (KLKB1) reciprocal activation without affecting their amidolytic activities. Blocks binding of host F12 and high molecular weight kininogen (KNG1) to negatively charged surfaces. Attenuates generation of bradykinin by interfering with activation of host kallikrein-kinin system. In Triatoma infestans (Assassin bug), this protein is Triafestin-1.